The primary structure comprises 80 residues: RNA-binding protein Hfq (80 aa).

One can recognise a Sm domain in the interval 10-69; that stretch reads DPFLNLLRKEHVPVSIYLVNGIKLQGHIESFDQYVVLLRNTVTQMVYKHAISTVVPGRPV.

Belongs to the Hfq family. Homohexamer.

Functionally, RNA chaperone that binds small regulatory RNA (sRNAs) and mRNAs to facilitate mRNA translational regulation in response to envelope stress, environmental stress and changes in metabolite concentrations. Also binds with high specificity to tRNAs. In Leptothrix cholodnii (strain ATCC 51168 / LMG 8142 / SP-6) (Leptothrix discophora (strain SP-6)), this protein is RNA-binding protein Hfq.